The sequence spans 437 residues: GTPase Der (437 aa).

2 EngA-type G domains span residues 4–167 (PVVA…PDEA) and 176–352 (IRFS…DNHR). Residues 10-17 (GRPNVGKS), 57-61 (DTGGI), 119-122 (NKVD), 182-189 (GRPNVGKS), 230-234 (DTAGM), and 295-298 (NKWD) contribute to the GTP site. A KH-like domain is found at 353-437 (KRISSSTLND…PIKLIVRARK (85 aa)).

It belongs to the TRAFAC class TrmE-Era-EngA-EngB-Septin-like GTPase superfamily. EngA (Der) GTPase family. In terms of assembly, associates with the 50S ribosomal subunit.

In terms of biological role, GTPase that plays an essential role in the late steps of ribosome biogenesis. This Leuconostoc citreum (strain KM20) protein is GTPase Der.